Consider the following 158-residue polypeptide: MALLTTGKGFVRALEKSGALGVYAPLEGGFEGRYQRRLRTNGYDSLSLTARGLGDVSAYLMGVHGVRPPHLGKKNIGQGAAVGPIYFVPPIAAYQLESLSPQSKGLVLWILEGYILSKAELEYLVSLPQQEPRIKVVVELGGERYFRWEPLENLIAVA.

Belongs to the complex I NdhN subunit family. As to quaternary structure, NDH-1 can be composed of about 15 different subunits; different subcomplexes with different compositions have been identified which probably have different functions.

Its subcellular location is the cellular thylakoid membrane. The enzyme catalyses a plastoquinone + NADH + (n+1) H(+)(in) = a plastoquinol + NAD(+) + n H(+)(out). It carries out the reaction a plastoquinone + NADPH + (n+1) H(+)(in) = a plastoquinol + NADP(+) + n H(+)(out). Its function is as follows. NDH-1 shuttles electrons from an unknown electron donor, via FMN and iron-sulfur (Fe-S) centers, to quinones in the respiratory and/or the photosynthetic chain. The immediate electron acceptor for the enzyme in this species is believed to be plastoquinone. Couples the redox reaction to proton translocation, and thus conserves the redox energy in a proton gradient. Cyanobacterial NDH-1 also plays a role in inorganic carbon-concentration. The chain is NAD(P)H-quinone oxidoreductase subunit N from Crocosphaera subtropica (strain ATCC 51142 / BH68) (Cyanothece sp. (strain ATCC 51142)).